A 283-amino-acid chain; its full sequence is Protein MGARP (283 aa).

Residues 1–36 (MYLRRAVSKTLALPRRAPPGPAPLGKDASLRRMSSR) are disordered. The Cytoplasmic segment spans residues 1-41 (MYLRRAVSKTLALPRRAPPGPAPLGKDASLRRMSSRKFPGT). Residues 42-64 (SGSNMIYYLVVGVTVSAGGYYTY) form a helical; Anchor for type IV membrane protein membrane-spanning segment. At 65-283 (KALTSKQVRR…VTEETASPQG (219 aa)) the chain is on the mitochondrial intermembrane side. Disordered stretches follow at residues 78-101 (VAEP…EHVA) and 118-283 (AESV…SPQG). Residues 128-160 (EAAVVLPEESQASAPSEVPAEAAVVEASLSSSE) are compositionally biased toward low complexity. Composition is skewed to polar residues over residues 171–184 (VETT…TQEV) and 199–220 (ADTS…QEGA). Basic and acidic residues predominate over residues 221–245 (DTTKEEADNSKEAEGTTTEDPRSIS).

Interacts with RHOT1/Miro-1, RHOT2/Miro-2, TRAK1/OIP106 and TRAK2/GRIF1. As to expression, expressed in the ovary, testis, brain, adrenal glands and the compartments of the visual nervous system. Expressed in corneal endothelium (CE) (at protein level). Expressed in steroidogenic tissues with the highest level of expression observed in the adrenal gland. Weakly expressed in placenta. Weakly expressed in astrocytes and neurons under normoxia. Strongly expressed in astrocytes and neurons under hypoxia. Expressed in each layer of the retina, with particularly higher staining in the inner segment of the photoreceptor (IS), the outer plexiform layer (OPL) and the ganglion cell layer (GCL).

Its subcellular location is the mitochondrion. It localises to the mitochondrion outer membrane. It is found in the mitochondrion inner membrane. In terms of biological role, plays a role in the trafficking of mitochondria along microtubules. Regulates the kinesin-mediated axonal transport of mitochondria to nerve terminals along microtubules during hypoxia. Participates in the translocation of TRAK2/GRIF1 from the cytoplasm to the mitochondrion. Also plays a role in steroidogenesis through maintenance of mitochondrial abundance and morphology. Plays an inhibitory role during neocortex development by regulating mitochondrial morphology, distribution and motility in neocortical neurons. The polypeptide is Protein MGARP (Mgarp) (Mus musculus (Mouse)).